The sequence spans 685 residues: MHSEELLAQVAALPALPGVYRYFDSQGLLLYVGKARHLKRRVASYFTKNHGGTRIGHMVCKIARLETTVVRSEAEALLLENNLIKTQNPRFNILFRDDKSYPYLKITGAPASSAGRDAPGQRFPRIAYYRGAVDKQHRYFGPYPSAWAVKESIELLQKVFRLRTCEDTVFANRTRPCLLYQIKRCSGPCVNLIAPEAYAVDVQHAQALLSGQTQELLQAMEARMMAYSGQLAFEQAAEVRNQMQALSRVLHQQSIESAHDKDVDILAVRVQGGRACVNLAMVRGGRHLGDRPYFPTHLEDAALFEQETRDAEEAPATPPRPVEALVLEAFVAQHYMVVAPPPVLVTSTPLDKALLEALSGHLTAAQGGDHAPAAQGGDPPPAASSGGHPLRGTVHITAVHQPREQRRAWLEMAQKNADLQLARLLAQEGSQQARTRALAEALDLPLADLDPLTIECFDISHTAGEATQASCVVFHHHKMQSSEYRRYKIDGITGGDDYAAMRQVLTRRYGKLAEAAHEAGGVDCAARPAAPAQGQARLPDLVLIDGGKGQVGVAREVFTALGLDLTRIVGVEKGEGRKVGLEELVFADGREKASLGKDSAALMLVAQIRDEAHRFAITGMRAARARVRTGGGQLQEIAGVGPKKRARLLQRFGGVRGVASASVEDLITVDGISRALAEEIYRALR.

In terms of domain architecture, GIY-YIG spans 15 to 93 (ALPGVYRYFD…IKTQNPRFNI (79 aa)). The UVR domain occupies 214–249 (QELLQAMEARMMAYSGQLAFEQAAEVRNQMQALSRV). The span at 365–388 (AQGGDHAPAAQGGDPPPAASSGGH) shows a compositional bias: low complexity. Positions 365-391 (AQGGDHAPAAQGGDPPPAASSGGHPLR) are disordered.

The protein belongs to the UvrC family. As to quaternary structure, interacts with UvrB in an incision complex.

It localises to the cytoplasm. The UvrABC repair system catalyzes the recognition and processing of DNA lesions. UvrC both incises the 5' and 3' sides of the lesion. The N-terminal half is responsible for the 3' incision and the C-terminal half is responsible for the 5' incision. This chain is UvrABC system protein C, found in Verminephrobacter eiseniae (strain EF01-2).